Consider the following 247-residue polypeptide: Small ribosomal subunit protein uS2 (247 aa).

The protein belongs to the universal ribosomal protein uS2 family.

This chain is Small ribosomal subunit protein uS2, found in Ectopseudomonas mendocina (strain ymp) (Pseudomonas mendocina).